The following is a 198-amino-acid chain: Probable host range protein 2 (198 aa).

Residues 171–198 form a disordered region; that stretch reads SDDDDDNDNADDDEEDDDEVNDIEDDYE.

It belongs to the poxviridae C7 protein family.

Plays a role for multiplication of the virus in different cell types. This chain is Probable host range protein 2, found in Bos taurus (Bovine).